The primary structure comprises 108 residues: Large ribosomal subunit protein uL24 (108 aa).

The protein belongs to the universal ribosomal protein uL24 family. Part of the 50S ribosomal subunit.

Its function is as follows. One of two assembly initiator proteins, it binds directly to the 5'-end of the 23S rRNA, where it nucleates assembly of the 50S subunit. One of the proteins that surrounds the polypeptide exit tunnel on the outside of the subunit. In Geotalea daltonii (strain DSM 22248 / JCM 15807 / FRC-32) (Geobacter daltonii), this protein is Large ribosomal subunit protein uL24.